The following is a 1553-amino-acid chain: Pre-mRNA cleavage complex 2 protein Pcf11 (1553 aa).

An N-acetylserine modification is found at serine 2. In terms of domain architecture, CID spans 14 to 142 (AREDACRDYQ…ALDVRVNSLD (129 aa)). Serine 120 bears the Phosphoserine mark. Threonine 121 bears the Phosphothreonine mark. Residues 167–186 (NKSPDEPSTPGTVVSSPSIS) form a disordered region. A phosphoserine mark is found at serine 169 and serine 182. A compositionally biased stretch (low complexity) spans 174–186 (STPGTVVSSPSIS). A coiled-coil region spans residues 208–235 (LLAKQKQLLELQQKKLELELEQAKAQLA). The tract at residues 265-648 (AVKTPHQVPV…KQQHRLSVDA (384 aa)) is disordered. Lysine 291 participates in a covalent cross-link: Glycyl lysine isopeptide (Lys-Gly) (interchain with G-Cter in SUMO2). A compositionally biased stretch (basic and acidic residues) spans 308 to 318 (HGKEQSHRKEF). Polar residues predominate over residues 321–342 (NTINQSDIKTSKNVPSEKLNSS). Lysine 329 participates in a covalent cross-link: Glycyl lysine isopeptide (Lys-Gly) (interchain with G-Cter in SUMO2). Composition is skewed to basic and acidic residues over residues 343–365 (KQEK…DSKS), 381–422 (HTKD…DVKE), and 428–443 (EKKE…EHRV). Lysine 457 participates in a covalent cross-link: Glycyl lysine isopeptide (Lys-Gly) (interchain with G-Cter in SUMO2). The segment covering 476–487 (STRKRSRSRSPK) has biased composition (basic residues). Residues serine 490, serine 495, serine 510, and serine 512 each carry the phosphoserine modification. Over residues 495 to 509 (SPKRRDRRSPKRRQR) the composition is skewed to basic residues. 2 stretches are compositionally biased toward basic and acidic residues: residues 530–568 (SHME…DRPQ) and 600–616 (SGWE…EHSK). A Phosphoserine modification is found at serine 645. A Glycyl lysine isopeptide (Lys-Gly) (interchain with G-Cter in SUMO2) cross-link involves residue lysine 654. Serine 705 is modified (phosphoserine). A disordered region spans residues 707–733 (FNDRFPLKRPRYEDSDKPFVDGPASRF). Basic and acidic residues predominate over residues 716 to 725 (PRYEDSDKPF). Residue lysine 723 forms a Glycyl lysine isopeptide (Lys-Gly) (interchain with G-Cter in SUMO2) linkage. Serine 777 is modified (phosphoserine). Threonine 785 carries the phosphothreonine modification. Residue serine 794 is modified to Phosphoserine. Residues arginine 805, arginine 820, and arginine 833 each carry the asymmetric dimethylarginine modification. The residue at position 851 (serine 851) is a Phosphoserine. The tract at residues 921–940 (HGPSGAAIRFDGPHGQPGGG) is disordered. 8 positions are modified to asymmetric dimethylarginine: arginine 929, arginine 944, arginine 957, arginine 982, arginine 995, arginine 1008, arginine 1092, and arginine 1103. Lysine 1276 is covalently cross-linked (Glycyl lysine isopeptide (Lys-Gly) (interchain with G-Cter in SUMO2)). The disordered stretch occupies residues 1286–1313 (DSATAQVTEAVAQPPPEEDEDQNEDQDV). Residues 1301–1313 (PEEDEDQNEDQDV) are compositionally biased toward acidic residues. Residues lysine 1417, lysine 1509, lysine 1522, and lysine 1544 each participate in a glycyl lysine isopeptide (Lys-Gly) (interchain with G-Cter in SUMO2) cross-link. Residues 1516–1553 (CESPKVKEEQIDAPPACSEESVATPTEIKTESDTVESV) form a disordered region.

As to quaternary structure, associates with the phosphorylated CTD domain of POLR2A /RNA polymerase II. Phosphorylation at Ser-120 and/or Thr-121 by WNK1 weakens its association with POLR2A/RNA polymerase II, promoting transcript release from the chromatin template and mRNA export to the cytoplasm.

The protein resides in the nucleus. In terms of biological role, component of pre-mRNA cleavage complex II, which promotes transcription termination by RNA polymerase II. In Mus musculus (Mouse), this protein is Pre-mRNA cleavage complex 2 protein Pcf11.